The primary structure comprises 1366 residues: Serine/threonine-protein kinase RUNKEL (1366 aa).

ATP-binding positions include 10 to 18 and Lys-33; that span reads IGHGKCSTV. Asp-121 acts as the Proton acceptor in catalysis. Disordered stretches follow at residues 276 to 356, 367 to 386, 398 to 502, and 524 to 549; these read TKPC…VNIL, QKEN…NENC, LDFD…DSSK, and PSRK…FSKK. Positions 283 to 302 are enriched in basic and acidic residues; sequence RNGDRPNKTPPKYREKDRKG. Positions 304 to 313 are enriched in polar residues; sequence SKQNENSIQG. Basic and acidic residues predominate over residues 367 to 376; that stretch reads QKENEKENYR. Over residues 398–414 the composition is skewed to acidic residues; that stretch reads LDFDENNDDEGPDESEG. Positions 422-433 are enriched in basic and acidic residues; that stretch reads QEERVMSHNENH. Positions 438 to 454 are enriched in polar residues; it reads VVSSNVPDENSSANETP. HEAT repeat units lie at residues 595 to 633, 638 to 675, 699 to 737, 835 to 872, 878 to 907, 908 to 945, 946 to 986, 992 to 1018, 1019 to 1057, 1072 to 1111, 1279 to 1316, and 1329 to 1366; these read LTNG…HSTS, LANS…YIST, QVSN…QGAY, TEEK…NSRR, FCNA…AFVN, VIAS…RAPV, KTNA…LVEA, DDFR…NGEI, IIRE…LLTE, ISNS…IKIS, TNLP…YACK, and GHDV…RLPR.

It belongs to the protein kinase superfamily. Ser/Thr protein kinase family. In terms of assembly, binds to microtubules (MT). As to expression, expressed in proliferating tissues of seedlings, lateral roots, young rosette leaves, siliques, flowers, embryos and stems (including apical meristem).

The protein resides in the cytoplasm. Its subcellular location is the cytoskeleton. The protein localises to the phragmoplast. It is found in the spindle. It carries out the reaction L-seryl-[protein] + ATP = O-phospho-L-seryl-[protein] + ADP + H(+). It catalyses the reaction L-threonyl-[protein] + ATP = O-phospho-L-threonyl-[protein] + ADP + H(+). In terms of biological role, essential protein that regulates phragmoplast microtubule organization during cell plate expansion in cytokinesis during cell division, both somatic and syncytial. Required for endosperm cellularisation. In pollen development, involved in cellularisation during microsporogenesis by regulating radial microtubules (MT) organization in microspore mother cells. Seems to not have kinase activity. The chain is Serine/threonine-protein kinase RUNKEL from Arabidopsis thaliana (Mouse-ear cress).